A 79-amino-acid polypeptide reads, in one-letter code: Conotoxin 8 (79 aa).

The N-terminal stretch at 1 to 22 is a signal peptide; it reads MKLTCVLIITVLFLTASQLITA. A propeptide spanning residues 23–47 is cleaved from the precursor; that stretch reads DYSRGQRQYRAVRLGDEMRNFKGAR. 3 disulfides stabilise this stretch: Cys49/Cys62, Cys56/Cys67, and Cys61/Cys77.

The protein belongs to the conotoxin O1 superfamily. Expressed by the venom duct.

Its subcellular location is the secreted. This is Conotoxin 8 from Conus vexillum (Flag cone).